Consider the following 98-residue polypeptide: Cell cycle protein GpsB (98 aa).

A coiled-coil region spans residues 34 to 71 (LDIVIKDYEAFQQELDELRQENARLKRQVEELQKRPTT).

This sequence belongs to the GpsB family. In terms of assembly, forms polymers through the coiled coil domains. Interacts with PBP1, MreC and EzrA.

It localises to the cytoplasm. In terms of biological role, divisome component that associates with the complex late in its assembly, after the Z-ring is formed, and is dependent on DivIC and PBP2B for its recruitment to the divisome. Together with EzrA, is a key component of the system that regulates PBP1 localization during cell cycle progression. Its main role could be the removal of PBP1 from the cell pole after pole maturation is completed. Also contributes to the recruitment of PBP1 to the division complex. Not essential for septum formation. This chain is Cell cycle protein GpsB, found in Geobacillus thermodenitrificans (strain NG80-2).